The chain runs to 104 residues: Transcription and mRNA export factor ENY2 (104 aa).

A compositionally biased stretch (basic and acidic residues) spans 1–14; sequence MADYGSDKKSRDNQ. Positions 1–22 are disordered; that stretch reads MADYGSDKKSRDNQMRSAINQQ.

The protein belongs to the ENY2 family. In terms of assembly, component of the nuclear pore complex (NPC)-associated TREX-2 complex (transcription and export complex 2). Component of the SAGA transcription coactivator-HAT complex. Within the SAGA complex, participates in a subcomplex of SAGA called the DUB module (deubiquitination module).

The protein resides in the nucleus. It localises to the nucleoplasm. In terms of biological role, involved in mRNA export coupled transcription activation by association with both the TREX-2 and the SAGA complexes. The transcription regulatory histone acetylation (HAT) complex SAGA is a multiprotein complex that activates transcription by remodeling chromatin and mediating histone acetylation and deubiquitination. Within the SAGA complex, participates in a subcomplex that specifically deubiquitinates histones. The SAGA complex is recruited to specific gene promoters by activators, where it is required for transcription. The TREX-2 complex functions in docking export-competent ribonucleoprotein particles (mRNPs) to the nuclear entrance of the nuclear pore complex (nuclear basket). TREX-2 participates in mRNA export and accurate chromatin positioning in the nucleus by tethering genes to the nuclear periphery. This Ciona intestinalis (Transparent sea squirt) protein is Transcription and mRNA export factor ENY2.